The sequence spans 304 residues: UDP-3-O-acyl-N-acetylglucosamine deacetylase (304 aa).

Zn(2+)-binding residues include His-78, His-237, and Asp-241. Catalysis depends on His-264, which acts as the Proton donor.

The protein belongs to the LpxC family. It depends on Zn(2+) as a cofactor.

The catalysed reaction is a UDP-3-O-[(3R)-3-hydroxyacyl]-N-acetyl-alpha-D-glucosamine + H2O = a UDP-3-O-[(3R)-3-hydroxyacyl]-alpha-D-glucosamine + acetate. It functions in the pathway glycolipid biosynthesis; lipid IV(A) biosynthesis; lipid IV(A) from (3R)-3-hydroxytetradecanoyl-[acyl-carrier-protein] and UDP-N-acetyl-alpha-D-glucosamine: step 2/6. Functionally, catalyzes the hydrolysis of UDP-3-O-myristoyl-N-acetylglucosamine to form UDP-3-O-myristoylglucosamine and acetate, the committed step in lipid A biosynthesis. The chain is UDP-3-O-acyl-N-acetylglucosamine deacetylase from Xylella fastidiosa (strain Temecula1 / ATCC 700964).